The following is a 358-amino-acid chain: Oligopeptide transport ATP-binding protein OppD (358 aa).

The ABC transporter domain occupies 8-259 (LEVKDLAISF…PRHPYTWGLL (252 aa)). 44 to 51 (GESGSGKS) provides a ligand contact to ATP.

Belongs to the ABC transporter superfamily. As to quaternary structure, the complex is composed of two ATP-binding proteins (OppD and OppF), two transmembrane proteins (OppB and OppC) and a solute-binding protein (OppA).

It localises to the cell membrane. It catalyses the reaction a [peptide](out) + ATP + H2O = a [peptide](in) + ADP + phosphate + H(+). In terms of biological role, part of the ABC transporter complex OppABCDF involved in the uptake of oligopeptides. Probably responsible for energy coupling to the transport system. Required for sporulation and genetic competence. The protein is Oligopeptide transport ATP-binding protein OppD of Bacillus subtilis (strain 168).